The chain runs to 522 residues: Glutamyl-tRNA(Gln) amidotransferase subunit A (522 aa).

Catalysis depends on charge relay system residues Lys88 and Ser163. The active-site Acyl-ester intermediate is the Ser187.

Belongs to the amidase family. GatA subfamily. Heterotrimer of A, B and C subunits.

The enzyme catalyses L-glutamyl-tRNA(Gln) + L-glutamine + ATP + H2O = L-glutaminyl-tRNA(Gln) + L-glutamate + ADP + phosphate + H(+). Functionally, allows the formation of correctly charged Gln-tRNA(Gln) through the transamidation of misacylated Glu-tRNA(Gln) in organisms which lack glutaminyl-tRNA synthetase. The reaction takes place in the presence of glutamine and ATP through an activated gamma-phospho-Glu-tRNA(Gln). The protein is Glutamyl-tRNA(Gln) amidotransferase subunit A of Paenarthrobacter aurescens (strain TC1).